The primary structure comprises 571 residues: Urease subunit alpha (571 aa).

Residues 133–571 form the Urease domain; it reads GGIDTHVHFI…LPLTQRYFLF (439 aa). The Ni(2+) site is built by H138, H140, and K221. K221 carries the N6-carboxylysine modification. Substrate is bound at residue H223. Ni(2+)-binding residues include H250 and H276. H324 (proton donor) is an active-site residue. D364 contacts Ni(2+).

This sequence belongs to the metallo-dependent hydrolases superfamily. Urease alpha subunit family. As to quaternary structure, heterotrimer of UreA (gamma), UreB (beta) and UreC (alpha) subunits. Three heterotrimers associate to form the active enzyme. The cofactor is Ni cation. In terms of processing, carboxylation allows a single lysine to coordinate two nickel ions.

It localises to the cytoplasm. It catalyses the reaction urea + 2 H2O + H(+) = hydrogencarbonate + 2 NH4(+). It participates in nitrogen metabolism; urea degradation; CO(2) and NH(3) from urea (urease route): step 1/1. This is Urease subunit alpha from Staphylococcus aureus (strain bovine RF122 / ET3-1).